The primary structure comprises 499 residues: Bifunctional purine biosynthesis protein PurH (499 aa).

An MGS-like domain is found at 1–144 (MINRALISVY…KNFKDVIVVT (144 aa)).

The protein belongs to the PurH family.

The catalysed reaction is (6R)-10-formyltetrahydrofolate + 5-amino-1-(5-phospho-beta-D-ribosyl)imidazole-4-carboxamide = 5-formamido-1-(5-phospho-D-ribosyl)imidazole-4-carboxamide + (6S)-5,6,7,8-tetrahydrofolate. It carries out the reaction IMP + H2O = 5-formamido-1-(5-phospho-D-ribosyl)imidazole-4-carboxamide. It participates in purine metabolism; IMP biosynthesis via de novo pathway; 5-formamido-1-(5-phospho-D-ribosyl)imidazole-4-carboxamide from 5-amino-1-(5-phospho-D-ribosyl)imidazole-4-carboxamide (10-formyl THF route): step 1/1. The protein operates within purine metabolism; IMP biosynthesis via de novo pathway; IMP from 5-formamido-1-(5-phospho-D-ribosyl)imidazole-4-carboxamide: step 1/1. This chain is Bifunctional purine biosynthesis protein PurH, found in Clostridium kluyveri (strain NBRC 12016).